The sequence spans 503 residues: Cytochrome P450 3A25 (503 aa).

A heme-binding site is contributed by Cys442.

Belongs to the cytochrome P450 family. Heme is required as a cofactor.

Its subcellular location is the endoplasmic reticulum membrane. The protein resides in the microsome membrane. It carries out the reaction an organic molecule + reduced [NADPH--hemoprotein reductase] + O2 = an alcohol + oxidized [NADPH--hemoprotein reductase] + H2O + H(+). Cytochromes P450 are a group of heme-thiolate monooxygenases. In liver microsomes, this enzyme is involved in an NADPH-dependent electron transport pathway. It oxidizes a variety of structurally unrelated compounds, including steroids, fatty acids, and xenobiotics. This is Cytochrome P450 3A25 (Cyp3a25) from Mus musculus (Mouse).